Consider the following 455-residue polypeptide: Ammonium transporter Rh type B (455 aa).

The Cytoplasmic segment spans residues 1 to 10; it reads MARVPRHRRL. Residues 11-31 form a helical membrane-spanning segment; that stretch reads VLPLLCLLFQGATALLFAIFV. Residues 32–58 are Extracellular-facing; sequence RYNHETDAALWHWGNHSNVDNEFYFRY. An N-linked (GlcNAc...) asparagine glycan is attached at Asn-46. The helical transmembrane segment at 59 to 79 threads the bilayer; sequence PSFQDVHVMVFVGFGFLMVFL. Residues 80–83 are Cytoplasmic-facing; that stretch reads QRYG. Residues 84–104 traverse the membrane as a helical segment; it reads FSSVGFTFLVASLTLQWATLL. Residues 105–121 lie on the Extracellular side of the membrane; sequence QGFLHSFHGGHIHVGVE. The helical transmembrane segment at 122–142 threads the bilayer; it reads SLINADFCAGAVLISFGAVLG. Residues 143 to 146 lie on the Cytoplasmic side of the membrane; that stretch reads KTGP. A helical membrane pass occupies residues 147-167; sequence AQLLLMALLEAVLFSVNEFIL. Residues 168–175 are Extracellular-facing; it reads LSLLGVRD. Residues 176–198 traverse the membrane as a helical segment; it reads AGGSMTIHTFGAYFGLFLSWVLY. The Cytoplasmic segment spans residues 199–216; the sequence is RSQLEKSRHRQSSVYNSD. Residues 217 to 237 form a helical membrane-spanning segment; sequence LFAMIGTIFLWVFWPSFNSAP. Over 238-248 the chain is Extracellular; the sequence is TALGDGQHRTV. The chain crosses the membrane as a helical span at residues 249–269; the sequence is VNTYYSLTASTLSTFALSALV. Residues 270-279 lie on the Cytoplasmic side of the membrane; it reads SGDGRLDMVH. Residues 280–300 traverse the membrane as a helical segment; sequence VQNAALAGGVVVGTSSEMMLT. Pro-301 is a topological domain (extracellular). Residues 302-322 form a helical membrane-spanning segment; it reads FGALAAGFLAGTVSTLGYKFF. Over 323–343 the chain is Cytoplasmic; the sequence is TPILESRFKLQDTCGVHNLHG. The helical transmembrane segment at 344 to 364 threads the bilayer; the sequence is MPGVLGAILGVVVAALATHEA. Topologically, residues 365-390 are extracellular; that stretch reads YGDGLQSVFPLIAKGQRSATSQAVYQ. The chain crosses the membrane as a helical span at residues 391–411; it reads LFGMFVTLVFASVGGSLGGLL. Over 412-455 the chain is Cytoplasmic; that stretch reads LRLPFLDSPPDSQCFEDQVYWEVPGEQETETQRPLRGGESDTRA. Residues 413–421 are interaction with ANK3; the sequence is RLPFLDSPP. The segment at 434 to 455 is disordered; the sequence is VPGEQETETQRPLRGGESDTRA. Positions 441 to 455 are enriched in basic and acidic residues; it reads ETQRPLRGGESDTRA.

It belongs to the ammonium transporter (TC 2.A.49) family. Rh subfamily. In terms of assembly, interacts (via C-terminus) with ANK2 and ANK3; required for targeting to the basolateral membrane. Post-translationally, N-glycosylated. In terms of tissue distribution, expressed in kidney by connecting segments and collecting tubules. Also expressed in liver by perivenous hepatocytes. Expressed in the forestomach and the fundus of the stomach. Expressed in duodenum, jejunum, ileum and colon at the level of villous (at protein level). Specifically expressed in kidney where it is restricted to the epithelial linings of the convoluted tubules and the loop of Henle. Also detected in ovary. Expressed by hepatocytes and dermal hair follicles and papillae.

The protein resides in the cell membrane. The protein localises to the basolateral cell membrane. The catalysed reaction is NH4(+)(in) = NH4(+)(out). It catalyses the reaction methylamine(out) = methylamine(in). The enzyme catalyses CO2(out) = CO2(in). Its activity is regulated as follows. Inhibited by amiloride. Its function is as follows. Ammonium transporter involved in the maintenance of acid-base homeostasis. Transports ammonium and its related derivative methylammonium across the basolateral plasma membrane of epithelial cells likely contributing to renal transepithelial ammonia transport and ammonia metabolism. May transport either NH4(+) or NH3 ammonia species predominantly mediating an electrogenic NH4(+) transport. May act as a CO2 channel providing for renal acid secretion. The protein is Ammonium transporter Rh type B (Rhbg) of Mus musculus (Mouse).